We begin with the raw amino-acid sequence, 312 residues long: Aspartate carbamoyltransferase catalytic subunit (312 aa).

Carbamoyl phosphate-binding residues include arginine 55 and threonine 56. Lysine 83 is an L-aspartate binding site. Carbamoyl phosphate contacts are provided by arginine 105, histidine 138, and glutamine 141. Residues arginine 171 and arginine 225 each contribute to the L-aspartate site. Carbamoyl phosphate-binding residues include glycine 266 and proline 267.

The protein belongs to the aspartate/ornithine carbamoyltransferase superfamily. ATCase family. In terms of assembly, heterododecamer (2C3:3R2) of six catalytic PyrB chains organized as two trimers (C3), and six regulatory PyrI chains organized as three dimers (R2).

The catalysed reaction is carbamoyl phosphate + L-aspartate = N-carbamoyl-L-aspartate + phosphate + H(+). The protein operates within pyrimidine metabolism; UMP biosynthesis via de novo pathway; (S)-dihydroorotate from bicarbonate: step 2/3. Catalyzes the condensation of carbamoyl phosphate and aspartate to form carbamoyl aspartate and inorganic phosphate, the committed step in the de novo pyrimidine nucleotide biosynthesis pathway. The polypeptide is Aspartate carbamoyltransferase catalytic subunit (Corynebacterium glutamicum (strain ATCC 13032 / DSM 20300 / JCM 1318 / BCRC 11384 / CCUG 27702 / LMG 3730 / NBRC 12168 / NCIMB 10025 / NRRL B-2784 / 534)).